We begin with the raw amino-acid sequence, 184 residues long: Outer-membrane lipoprotein carrier protein (184 aa).

A signal peptide spans Met-1–Ala-19.

This sequence belongs to the LolA family. As to quaternary structure, monomer.

It is found in the periplasm. Its function is as follows. Participates in the translocation of lipoproteins from the inner membrane to the outer membrane. Only forms a complex with a lipoprotein if the residue after the N-terminal Cys is not an aspartate (The Asp acts as a targeting signal to indicate that the lipoprotein should stay in the inner membrane). The chain is Outer-membrane lipoprotein carrier protein from Helicobacter pylori (strain P12).